Reading from the N-terminus, the 448-residue chain is Glutamyl-tRNA reductase (448 aa).

Substrate contacts are provided by residues 49-52, S109, 114-116, and Q120; these read TCNR and ETQ. Residue C50 is the Nucleophile of the active site. 189–194 lines the NADP(+) pocket; sequence GAGEMS.

This sequence belongs to the glutamyl-tRNA reductase family. As to quaternary structure, homodimer.

It catalyses the reaction (S)-4-amino-5-oxopentanoate + tRNA(Glu) + NADP(+) = L-glutamyl-tRNA(Glu) + NADPH + H(+). The protein operates within porphyrin-containing compound metabolism; protoporphyrin-IX biosynthesis; 5-aminolevulinate from L-glutamyl-tRNA(Glu): step 1/2. Its function is as follows. Catalyzes the NADPH-dependent reduction of glutamyl-tRNA(Glu) to glutamate 1-semialdehyde (GSA). This Staphylococcus aureus (strain MRSA252) protein is Glutamyl-tRNA reductase.